The primary structure comprises 255 residues: MSIRVIIAGFKGKMGQAACQMVLTDSDLDLVAVLDPFESESEWQGIPVFKDKADLAGFEADVWVDFTTPAVAYENTRFALENGFAPVVGTTGFTSEEIAELKEFSRAQDLGGLIAPNFALGAVLLMQFATQAAKYFPNVEIIELHHDKKKDAPSGTAIKTAELMAEVRESIQQGAADEEELIAGARGADFDGMRIHSVRLPGLVAHQEVIFGNQGEGLTLRHDSYDRISFMTGVNLGIKEVVKRHELVYGLEHLL.

NAD(+) contacts are provided by residues 9–14, Asp35, 89–91, and 115–118; these read GFKGKM, GTT, and APNF. His145 functions as the Proton donor/acceptor in the catalytic mechanism. A (S)-2,3,4,5-tetrahydrodipicolinate-binding site is contributed by His146. Residue Lys149 is the Proton donor of the active site. 155–156 contributes to the (S)-2,3,4,5-tetrahydrodipicolinate binding site; it reads GT.

It belongs to the DapB family.

Its subcellular location is the cytoplasm. It carries out the reaction (S)-2,3,4,5-tetrahydrodipicolinate + NAD(+) + H2O = (2S,4S)-4-hydroxy-2,3,4,5-tetrahydrodipicolinate + NADH + H(+). The catalysed reaction is (S)-2,3,4,5-tetrahydrodipicolinate + NADP(+) + H2O = (2S,4S)-4-hydroxy-2,3,4,5-tetrahydrodipicolinate + NADPH + H(+). It participates in amino-acid biosynthesis; L-lysine biosynthesis via DAP pathway; (S)-tetrahydrodipicolinate from L-aspartate: step 4/4. Catalyzes the conversion of 4-hydroxy-tetrahydrodipicolinate (HTPA) to tetrahydrodipicolinate. The chain is 4-hydroxy-tetrahydrodipicolinate reductase from Streptococcus pneumoniae (strain 70585).